Reading from the N-terminus, the 409-residue chain is O-glucosyltransferase rumi (409 aa).

An N-terminal signal peptide occupies residues 1–20 (MLINVVLIILLVGLNGKASG). Intrachain disulfides connect Cys62/Cys73, Cys71/Cys376, Cys118/Cys124, and Cys280/Cys303. Asp149 functions as the Proton donor/acceptor in the catalytic mechanism. The interaction with the consensus sequence C-X-S-X-[PA]-C in peptide substrates stretch occupies residues 190–195 (ATKLHP). Residues 227–231 (RGSRT), Arg235, 274–276 (VSF), and 292–296 (AASFR) contribute to the UDP-alpha-D-glucose site. Residues 406–409 (KDEL) carry the Prevents secretion from ER motif.

Belongs to the glycosyltransferase 90 family.

The protein resides in the endoplasmic reticulum lumen. Its pathway is protein modification; protein glycosylation. Protein O-glucosyltransferase. Catalyzes the reaction that attaches glucose through an O-glycosidic linkage to a conserved serine residue found in the consensus sequence C-X-S-X-[PA]-C in epidermal growth factor-like repeats. Regulates Notch signaling by glucosylating Notch in the ER, glucosylation is required for the correct folding and cleavage of Notch. This Drosophila pseudoobscura pseudoobscura (Fruit fly) protein is O-glucosyltransferase rumi.